We begin with the raw amino-acid sequence, 684 residues long: Histamine oxidase (684 aa).

316–327 (YFDSGEYLVGRD) is a binding site for substrate. Asp-318 acts as the Proton acceptor in catalysis. An intrachain disulfide couples Cys-337 to Cys-363. Substrate is bound at residue 399–404 (VGNYDY). Tyr-402 functions as the Schiff-base intermediate with substrate; via topaquinone in the catalytic mechanism. Tyr-402 carries the 2',4',5'-topaquinone modification. Residues His-451 and His-453 each coordinate Cu cation. 4 residues coordinate Ca(2+): Asp-460, Glu-500, Tyr-590, and Asp-601. A Mn(2+)-binding site is contributed by Asp-460. Residue Asp-601 participates in Mn(2+) binding. Residue His-612 coordinates Cu cation. Positions 647–684 (SSAAGHCGTGSEREHAAPGGTAVGHSGPDTGGQGHCGH) are disordered. Gly residues predominate over residues 675-684 (DTGGQGHCGH).

This sequence belongs to the copper/topaquinone oxidase family. In terms of assembly, homodimer. Cu cation is required as a cofactor. It depends on Zn(2+) as a cofactor. The cofactor is Ca(2+). Requires L-topaquinone as cofactor. Mn(2+) serves as cofactor. Topaquinone (TPQ) is generated by copper-dependent autoxidation of a specific tyrosyl residue.

It is found in the cytoplasm. The catalysed reaction is a primary methyl amine + O2 + H2O = an aldehyde + H2O2 + NH4(+). It carries out the reaction histamine + O2 + H2O = imidazole-4-acetaldehyde + H2O2 + NH4(+). Functionally, oxidizes histamine. Other amines including phenethylamine, tyramine, tryptamine, putrescine, and benzylamine also serve as substrate. The protein is Histamine oxidase of Arthrobacter globiformis.